Reading from the N-terminus, the 210-residue chain is 3-phospho-D-glycerate guanylyltransferase (210 aa).

This sequence belongs to the CofC family.

The enzyme catalyses (2R)-3-phosphoglycerate + GTP + H(+) = 3-[(R)-glyceryl]-diphospho-5'-guanosine + diphosphate. It functions in the pathway cofactor biosynthesis; coenzyme F420 biosynthesis. Its function is as follows. Guanylyltransferase that catalyzes the activation of (2R)-3-phosphoglycerate (3PG) as 3-[(R)-glyceryl]-diphospho-5'-guanosine, via the condensation of 3PG with GTP. It is involved in the biosynthesis of a derivative of the hydride carrier cofactor coenzyme F420, 3PG-F420. The protein is 3-phospho-D-glycerate guanylyltransferase of Colwellia psychrerythraea (strain 34H / ATCC BAA-681) (Vibrio psychroerythus).